Reading from the N-terminus, the 508-residue chain is Photosystem II CP47 reaction center protein (508 aa).

6 helical membrane passes run 21–36 (AVHL…WAGS), 101–115 (IVLS…IWHW), 140–156 (GIHL…FGAF), 203–218 (IAAG…FHLS), 237–252 (VLSS…AFVV), and 457–472 (CFAL…HGSR).

Belongs to the PsbB/PsbC family. PsbB subfamily. PSII is composed of 1 copy each of membrane proteins PsbA, PsbB, PsbC, PsbD, PsbE, PsbF, PsbH, PsbI, PsbJ, PsbK, PsbL, PsbM, PsbT, PsbX, PsbY, PsbZ, Psb30/Ycf12, at least 3 peripheral proteins of the oxygen-evolving complex and a large number of cofactors. It forms dimeric complexes. Binds multiple chlorophylls. PSII binds additional chlorophylls, carotenoids and specific lipids. serves as cofactor.

Its subcellular location is the plastid. The protein localises to the chloroplast thylakoid membrane. In terms of biological role, one of the components of the core complex of photosystem II (PSII). It binds chlorophyll and helps catalyze the primary light-induced photochemical processes of PSII. PSII is a light-driven water:plastoquinone oxidoreductase, using light energy to abstract electrons from H(2)O, generating O(2) and a proton gradient subsequently used for ATP formation. The protein is Photosystem II CP47 reaction center protein of Zygnema circumcarinatum (Green alga).